A 274-amino-acid polypeptide reads, in one-letter code: Large ribosomal subunit protein uL2 (274 aa).

Disordered regions lie at residues 38–57 and 224–256; these read KRTGGRNNNGHITTRHVGGG and AMNPIDHPHGGGEGRNKGIQPVSPWGQKAKGYK. The segment covering 229–239 has biased composition (basic and acidic residues); it reads DHPHGGGEGRN.

It belongs to the universal ribosomal protein uL2 family. In terms of assembly, part of the 50S ribosomal subunit. Forms a bridge to the 30S subunit in the 70S ribosome.

Its function is as follows. One of the primary rRNA binding proteins. Required for association of the 30S and 50S subunits to form the 70S ribosome, for tRNA binding and peptide bond formation. It has been suggested to have peptidyltransferase activity; this is somewhat controversial. Makes several contacts with the 16S rRNA in the 70S ribosome. This chain is Large ribosomal subunit protein uL2, found in Acinetobacter baumannii (strain AB307-0294).